Here is a 348-residue protein sequence, read N- to C-terminus: Lysophosphatidic acid receptor 2 (348 aa).

The Extracellular segment spans residues 1–30 (MGQCYYNETIGFFYNNSGKELSLHWRPKDV). N-linked (GlcNAc...) asparagine glycans are attached at residues N7 and N15. A helical membrane pass occupies residues 31 to 51 (VVVALGLTVSVLVLLTNLLVI). Residues 52 to 66 (AAIASNRRFHQPIYY) are Cytoplasmic-facing. A helical transmembrane segment spans residues 67–87 (LLGNLAAADLFAGMAYLFLMF). Over 88 to 104 (HTGPRTARLSIKGWFLR) the chain is Extracellular. A helical transmembrane segment spans residues 105-124 (QGLLDTSLTASVATLLAIAV). Over 125–144 (ERHRSVMAVQLHSRLPRGRV) the chain is Cytoplasmic. A helical transmembrane segment spans residues 145 to 165 (VTLIVGVWAAALGLGLLPAHF). Topologically, residues 166 to 185 (WHCLCDLDSCSRMVPLFSRS) are extracellular. A helical membrane pass occupies residues 186-206 (YLAAWALSSLLVFLLMVAVYT). The Cytoplasmic portion of the chain corresponds to 207–239 (RIFFYVRRRVERMAEHVSCHPRYRETTLSLVKT). A helical membrane pass occupies residues 240-260 (VVIILGAFVVCWTPGQVVLLL). The Extracellular portion of the chain corresponds to 261–270 (DGLDCKSCNV). The chain crosses the membrane as a helical span at residues 271–291 (LAVEKYFLLLAEANSLVNAVV). The Cytoplasmic segment spans residues 292–348 (YSCRDAEMRRTFRRLLCCMCLRWSSHKSARYSASAQTGASTRIMLPENGRPLMDSTL). The S-palmitoyl cysteine moiety is linked to residue C308. The PDZ-binding signature appears at 345 to 348 (DSTL).

Belongs to the G-protein coupled receptor 1 family. Interacts with SLC9A3R2/NHERF2, MAGI3 and PLCB3. Interacts with RALA and GRK2. In terms of tissue distribution, most abundantly expressed in testes, kidney, and embryonic brain. Other organs also express the transcript, including heart, lung, spleen, thymus, stomach, and adult brain. Several have little or no expression, including liver, small intestine, and skeletal muscle.

The protein localises to the cell surface. It localises to the cell membrane. Its function is as follows. Receptor for lysophosphatidic acid (LPA), a mediator of diverse cellular activities. Seems to be coupled to the G(i)/G(o), G(12)/G(13), and G(q) families of heteromeric G proteins. Plays a key role in phospholipase C-beta (PLC-beta) signaling pathway Stimulates phospholipase C (PLC) activity in a manner that is independent of RALA activation. The protein is Lysophosphatidic acid receptor 2 of Mus musculus (Mouse).